Here is a 670-residue protein sequence, read N- to C-terminus: Lebercilin-like protein (670 aa).

The disordered stretch occupies residues K30–Y51. Positions F38 to Y51 are enriched in polar residues. Coiled coils occupy residues L148–E259 and A305–I336. A disordered region spans residues H374–T393. The stretch at E420–I440 forms a coiled coil. Disordered stretches follow at residues R495 to G516, K557 to K580, and L609 to I670. 2 stretches are compositionally biased toward basic and acidic residues: residues S560–S572 and G621–H632. The segment covering T651–T662 has biased composition (polar residues).

The protein belongs to the LCA5 family.

In Homo sapiens (Human), this protein is Lebercilin-like protein (LCA5L).